The primary structure comprises 114 residues: T cell receptor beta variable 6-5 (114 aa).

The N-terminal stretch at Met-1–Ala-21 is a signal peptide. An Ig-like domain is found at Gly-22–Tyr-114. Cys-42 and Cys-110 form a disulfide bridge. Asn-84 carries N-linked (GlcNAc...) asparagine glycosylation.

In terms of assembly, alpha-beta TR is a heterodimer composed of an alpha and beta chain; disulfide-linked. The alpha-beta TR is associated with the transmembrane signaling CD3 coreceptor proteins to form the TR-CD3 (TcR or TCR). The assembly of alpha-beta TR heterodimers with CD3 occurs in the endoplasmic reticulum where a single alpha-beta TR heterodimer associates with one CD3D-CD3E heterodimer, one CD3G-CD3E heterodimer and one CD247 homodimer forming a stable octameric structure. CD3D-CD3E and CD3G-CD3E heterodimers preferentially associate with TR alpha and TR beta chains, respectively. The association of the CD247 homodimer is the last step of TcR assembly in the endoplasmic reticulum and is required for transport to the cell surface.

Its subcellular location is the cell membrane. Its function is as follows. V region of the variable domain of T cell receptor (TR) beta chain that participates in the antigen recognition. Alpha-beta T cell receptors are antigen specific receptors which are essential to the immune response and are present on the cell surface of T lymphocytes. Recognize peptide-major histocompatibility (MH) (pMH) complexes that are displayed by antigen presenting cells (APC), a prerequisite for efficient T cell adaptive immunity against pathogens. Binding of alpha-beta TR to pMH complex initiates TR-CD3 clustering on the cell surface and intracellular activation of LCK that phosphorylates the ITAM motifs of CD3G, CD3D, CD3E and CD247 enabling the recruitment of ZAP70. In turn ZAP70 phosphorylates LAT, which recruits numerous signaling molecules to form the LAT signalosome. The LAT signalosome propagates signal branching to three major signaling pathways, the calcium, the mitogen-activated protein kinase (MAPK) kinase and the nuclear factor NF-kappa-B (NF-kB) pathways, leading to the mobilization of transcription factors that are critical for gene expression and essential for T cell growth and differentiation. The T cell repertoire is generated in the thymus, by V-(D)-J rearrangement. This repertoire is then shaped by intrathymic selection events to generate a peripheral T cell pool of self-MH restricted, non-autoaggressive T cells. Post-thymic interaction of alpha-beta TR with the pMH complexes shapes TR structural and functional avidity. The polypeptide is T cell receptor beta variable 6-5 (Homo sapiens (Human)).